We begin with the raw amino-acid sequence, 98 residues long: HssA/B-like protein 33 (98 aa).

Disordered regions lie at residues 1–29 and 60–98; these read MTLF…SGTS and AKSS…SCSC. Residues 60–72 show a composition bias toward gly residues; sequence AKSSGGSCGGKGG. Basic residues predominate over residues 73 to 88; the sequence is PHNHGHGNGHGPHGHG. The segment covering 89 to 98 has biased composition (gly residues); it reads GKGSGGSCSC.

The protein belongs to the hssA/B family.

This chain is HssA/B-like protein 33 (hssl33), found in Dictyostelium discoideum (Social amoeba).